Here is a 3856-residue protein sequence, read N- to C-terminus: Hybrid PKS-NRPS synthetase traA (3856 aa).

The Ketosynthase family 3 (KS3) domain occupies 6–438 (PEPIAIVGSG…GTNGHAILEE (433 aa)). Catalysis depends on for beta-ketoacyl synthase activity residues cysteine 179, histidine 318, and histidine 358. Positions 554–885 (IFTGQGAQWA…FSDALGFVWT (332 aa)) are malonyl-CoA:ACP transacylase (MAT) domain. The N-terminal hotdog fold stretch occupies residues 943–1081 (HELLGVPSPN…GKVTVIYGTP (139 aa)). Residues 943 to 1247 (HELLGVPSPN…LSMKPFSPAT (305 aa)) form a dehydratase (DH) domain region. In terms of domain architecture, PKS/mFAS DH spans 943–1249 (HELLGVPSPN…MKPFSPATAD (307 aa)). Histidine 975 (proton acceptor; for dehydratase activity) is an active-site residue. Residues 1096–1249 (MVDIQAEQFY…MKPFSPATAD (154 aa)) are C-terminal hotdog fold. Aspartate 1156 acts as the Proton donor; for dehydratase activity in catalysis. The segment at 1290–1456 (LACVAQQIVH…RKAGFSGIDS (167 aa)) is methyltransferase (MT) domain. The tract at residues 1984–2158 (TYVLVGLSGR…ATSLDIGSIV (175 aa)) is ketoreductase (KR) domain. Positions 2266–2347 (ADALEILKEL…TLCQQALEKL (82 aa)) constitute a Carrier 1 domain. O-(pantetheine 4'-phosphoryl)serine is present on serine 2307. The disordered stretch occupies residues 2351-2422 (ILPNVESGGP…SSTPATVLSN (72 aa)). Composition is skewed to low complexity over residues 2357-2369 (SGGP…SKPT) and 2399-2418 (TTSP…TPAT). Residues 2446–2884 (VKTELVSFQQ…FALFSDKELK (439 aa)) form a condensation (C) domain region. Residues 2910–3310 (QIAKENDDKV…GAMVFHNRIA (401 aa)) form an adenylation (A) domain region. A disordered region spans residues 3403–3429 (SKTDRKALKELPLPQRSNHDTGDNTES). Residues 3428–3507 (ESLTETMLEL…DMTQKIEESL (80 aa)) form the Carrier 2 domain. Serine 3467 is modified (O-(pantetheine 4'-phosphoryl)serine). A reductase (R) domain region spans residues 3544-3768 (VTGSGGFLGK…EMTPIHSAAS (225 aa)).

In the C-terminal section; belongs to the NRP synthetase family.

The protein operates within secondary metabolite biosynthesis. Functionally, hybrid PKS-NRPS synthetase; part of the tra gene cluster that produces terrestric acid. The clavatol biosynthesis cluster cla and the terrestric acid cluster tra are both involved in the production of peniphenones and penilactones. The non-reducing PKS claF is responsible for the formation of clavatol from successive condensations of 3 malonyl-CoA units, presumably with a simple acetyl-CoA starter unit, and 2 methylation steps. The esterase claE probably collaborates with claF by catalyzing the hydrolysis of ACP-bound acyl intermediates to free the ACP from stalled intermediates. The clavatol oxidase claD then converts clavatol to hydroxyclavatol. Spontaneous dehydration of hydroxyclavatol leads to the accumulation of the highly active ortho-quinone methide. On the other hand, the PKS-NRPS hybrid traA is involved in the formation of crustosic acid, with the help of traB and traD. The polyketide synthase module (PKS) of traA is responsible for the synthesis of the polyketide backbone via the condensation of an acetyl-CoA starter unit with 3 malonyl-CoA units. The downstream nonribosomal peptide synthetase (NRPS) module then amidates the carboxyl end of the polyketide with L-malic acid. Because traA lacks a designated enoylreductase (ER) domain, the required activity is provided the enoyl reductase traG. Crustosic acid undergoes decarboxylation and isomerization to the terrestric acid, catalyzed by the 2-oxoglutarate-dependent dioxygenase traH. Both acids are further converted to the 2 gamma-butyrolactones (R)-5-methyltetronic acid and (S)-5-carboxylmethyltetronic acid, with involvement of the cytochrome P450 monooxygenase claJ. Spontaneous addition of the methide to these gamma-butyrolactones leads to peniphenone D and penilactone D, which undergo again stereospecific attacking by methide to give penilactones A and B. The protein is Hybrid PKS-NRPS synthetase traA of Penicillium crustosum (Blue mold fungus).